Here is a 537-residue protein sequence, read N- to C-terminus: O-phosphoserine--tRNA(Cys) ligase (537 aa).

Residues 186–188 (HMT), 231–233 (SAS), 273–274 (YY), and Asn317 each bind substrate.

Belongs to the class-II aminoacyl-tRNA synthetase family. O-phosphoseryl-tRNA(Cys) synthetase subfamily. As to quaternary structure, homotetramer. Interacts with SepCysS.

It catalyses the reaction tRNA(Cys) + O-phospho-L-serine + ATP = O-phospho-L-seryl-tRNA(Cys) + AMP + diphosphate. Functionally, catalyzes the attachment of O-phosphoserine (Sep) to tRNA(Cys). This Methanococcus maripaludis (strain C5 / ATCC BAA-1333) protein is O-phosphoserine--tRNA(Cys) ligase.